A 325-amino-acid chain; its full sequence is MRVQSYLSLFSLVGAALCAPREHFKRTARTSAPAGCLTVGGSGTYSTIGAAFAALGSSSSEACIYISAGTYKEQLTFQYAGPLTLYGETTDTSSYKKNTVTITHTISSPEAGSLVASATVNAAMDNFTMYNINVVNGYGKGAQAVALAASGERQGYYGCQFLGYQDTLYARVGVQYYSNCYIEGAVDYIFGDASAWFGECDIVSNGAGYITAMSRETASDPAWYCFDHCNIYGKSGLDLTGDVYLGRPWRVLARVIYQNSELSDIINAAGWTTMAEGATPLYYEIGNTGDGADTSKRLYLSEISAAVTKATVLGSDWTDWLDWSY.

The signal sequence occupies residues 1-18; it reads MRVQSYLSLFSLVGAALC. N126 is a glycosylation site (N-linked (GlcNAc...) asparagine). Q143 lines the substrate pocket. The Proton donor role is filled by D166. The active-site Nucleophile is the D187. R247 and W249 together coordinate substrate.

It belongs to the pectinesterase family.

It is found in the secreted. It catalyses the reaction [(1-&gt;4)-alpha-D-galacturonosyl methyl ester](n) + n H2O = [(1-&gt;4)-alpha-D-galacturonosyl](n) + n methanol + n H(+). The protein operates within glycan metabolism; pectin degradation; 2-dehydro-3-deoxy-D-gluconate from pectin: step 1/5. In terms of biological role, involved in maceration and soft-rotting of plant tissue. Active against citrus pectin. In Emericella nidulans (strain FGSC A4 / ATCC 38163 / CBS 112.46 / NRRL 194 / M139) (Aspergillus nidulans), this protein is Pectinesterase A (pmeA).